Consider the following 448-residue polypeptide: MSTTIAVNGNHYQQLHQGRTSMYKSKVDVVLGAQWGDEGKGKVVDMLASEVDIVCRCQGGNNAGHTVVANGTEFDFHLLPSGVVNEKCISVIGNGVVIHLPSLFDEVLKNEAKGLQHLENRLIISDRAHLVFDFHQHVDGMQEAEKGGKSLGTTKKGIGPAYSSKATRNGIRVGELLGDFNLFSEKFKSIVNTHLRLFPSIKVDVDAELARYKDYVDKVRPYVKDTICFLHTALRNGKTILVEGANAAMLDIDFGTYPYVTSSNCSIGGVLTGLGLPPQTIGEVIGVVKAYTTRVGDGPFPTEQLNEIGDLLQTRGFEVGVTTKRKRRCGWLDIPLLKYTSLVNGYTCICITKLDILDTLPEIKVGVSYKRSSGDKLDHFPGTISELSDIEVEYAVLPGWQTSTEHIRNFKELPENAQNYVRFLESQLSVPVRWVGVGKGRESIINVH.

GTP contacts are provided by residues 36–42 and 64–66; these read GDEGKGK and GHT. Catalysis depends on D37, which acts as the Proton acceptor. Mg(2+)-binding residues include D37 and G64. Residues 37–40, 62–65, T154, R168, N246, T261, and R325 contribute to the IMP site; these read DEGK and NAGH. Residue H65 is the Proton donor of the active site. 321 to 327 provides a ligand contact to substrate; sequence VTTKRKR. Residues R327, 353–355, and 436–438 contribute to the GTP site; these read KLD and GVG.

It belongs to the adenylosuccinate synthetase family. Homodimer. It depends on Mg(2+) as a cofactor.

Its subcellular location is the cytoplasm. It catalyses the reaction IMP + L-aspartate + GTP = N(6)-(1,2-dicarboxyethyl)-AMP + GDP + phosphate + 2 H(+). Its pathway is purine metabolism; AMP biosynthesis via de novo pathway; AMP from IMP: step 1/2. Plays an important role in the de novo pathway and in the salvage pathway of purine nucleotide biosynthesis. Catalyzes the first committed step in the biosynthesis of AMP from IMP. This chain is Adenylosuccinate synthetase, found in Drosophila virilis (Fruit fly).